Reading from the N-terminus, the 367-residue chain is Cystinosin (367 aa).

Positions 1–22 (MIRNWLTIFILFPLKLVEKCES) are cleaved as a signal peptide. Topologically, residues 23 to 125 (SVSLTVPPVV…LVIRSSAISI (103 aa)) are lumenal. N-linked (GlcNAc...) (high mannose) asparagine glycosylation is found at Asn36, Asn41, and Asn51. Residue Asn66 is glycosylated (N-linked (GlcNAc...) asparagine). N-linked (GlcNAc...) (high mannose) asparagine glycosylation is found at Asn84, Asn104, and Asn107. In terms of domain architecture, PQ-loop 1 spans 123–189 (ISIINQVIGW…LLWVPYIKEQ (67 aa)). A helical membrane pass occupies residues 126–150 (INQVIGWIYFVAWSISFYPQVIMNW). Topologically, residues 151-159 (RRKSVIGLS) are cytoplasmic. A helical transmembrane segment spans residues 160-179 (FDFVALNLTGFVAYSVFNIG). Asn166 is an L-cystine binding site. Topologically, residues 180-202 (LLWVPYIKEQFLLKYPNGVNPVN) are lumenal. Residues 203-225 (SNDVFFSLHAVVLTLIIIVQCCL) traverse the membrane as a helical segment. Residue Asp205 coordinates H(+). The Cytoplasmic segment spans residues 226–234 (YERGGQRVS). The helical transmembrane segment at 235–257 (WPAIGFLVLAWLFAFVTMIVAAV) threads the bilayer. The Lumenal portion of the chain corresponds to 258–263 (GVTTWL). Residues 263–328 (LQFLFCFSYI…QSYNNDQWTL (66 aa)) enclose the PQ-loop 2 domain. Residues 264–289 (QFLFCFSYIKLAVTLVKYFPQAYMNF) traverse the membrane as a helical segment. Residues Lys273, Lys280, and Tyr281 each coordinate L-cystine. At 290–298 (YYKSTEGWS) the chain is on the cytoplasmic side. Residues 299–308 (IGNVLLDFTG) traverse the membrane as a helical segment. Asn301 and Asp305 together coordinate L-cystine. Asp305 provides a ligand contact to H(+). At 309–331 (GSFSLLQMFLQSYNNDQWTLIFG) the chain is on the lumenal side. A helical transmembrane segment spans residues 332-354 (DPTKFGLGVFSIVFDVVFFIQHF). Residue Asp346 participates in H(+) binding. The Cytoplasmic portion of the chain corresponds to 355–367 (CLYRKRPGYDQLN). Residues 362-366 (GYDQL) carry the Lysosomal targeting motif motif.

It belongs to the cystinosin family. Interacts with components of the V-ATPase complex. Interacts with components of the Ragulator complex. Interacts with RRAGA/RagA and RRAGC/RagC. Interacts with AP-3 complex subunit mu (AP3M1 or AP3M2). Strongly expressed in pancreas, kidney (adult and fetal), skeletal muscle, melanocytes and keratinocytes. Expressed at lower levels in placenta and heart. Weakly expressed in lung, liver and brain (adult and fetal). As to expression, represents 5-20 % of CTNS transcripts, with the exception of the testis that expresses both isoforms in equal proportions.

It localises to the lysosome membrane. Its subcellular location is the melanosome membrane. The protein resides in the cell membrane. It carries out the reaction L-cystine(out) + H(+)(out) = L-cystine(in) + H(+)(in). With respect to regulation, switches between a lumen- and a cytosol-open conformation: pH induces conformational changes and shifts the equilibrium to facilitate the transition between the lumen- and cytosol-open conformation, thereby promoting cystine transport. Protonation of specific aspartate residues (Asp-205, Asp-305 and Asp-346) favors the cytosol-open conformation. Its function is as follows. Cystine/H(+) symporter that mediates export of cystine, the oxidized dimer of cysteine, from lysosomes. Plays an important role in melanin synthesis by catalyzing cystine export from melanosomes, possibly by inhibiting pheomelanin synthesis. In addition to cystine export, also acts as a positive regulator of mTORC1 signaling in kidney proximal tubular cells, via interactions with components of the v-ATPase and Ragulator complexes. Also involved in small GTPase-regulated vesicle trafficking and lysosomal localization of LAMP2A, independently of cystine transporter activity. In Homo sapiens (Human), this protein is Cystinosin.